Consider the following 578-residue polypeptide: Zinc finger protein with KRAB and SCAN domains 8 (578 aa).

Residues 1 to 20 are disordered; sequence MAEESRKPSAPSPPDQTPEE. Ser12 bears the Phosphoserine mark. A Glycyl lysine isopeptide (Lys-Gly) (interchain with G-Cter in SUMO2) cross-link involves residue Lys26. Residues 51 to 133 enclose the SCAN box domain; sequence RLRFRQLCYQ…TLLEDLERQI (83 aa). A disordered region spans residues 158–205; sequence ASAPEPPNTQLQSEATQHKSPVPQESQERAMSTSQSPTRSQKGSSGDQ. The segment covering 165–205 has biased composition (polar residues); that stretch reads NTQLQSEATQHKSPVPQESQERAMSTSQSPTRSQKGSSGDQ. Residues Lys176 and Lys199 each participate in a glycyl lysine isopeptide (Lys-Gly) (interchain with G-Cter in SUMO2) cross-link. At Ser201 the chain carries Phosphoserine. One can recognise a KRAB domain in the interval 220–316; that stretch reads EKIEDMAVSL…GRLERQRGNP (97 aa). Glycyl lysine isopeptide (Lys-Gly) (interchain with G-Cter in SUMO2) cross-links involve residues Lys221, Lys272, and Lys288. 2 C2H2-type zinc fingers span residues 322–344 and 350–372; these read HKCD…WRIH and YQCN…QDIH. Glycyl lysine isopeptide (Lys-Gly) (interchain with G-Cter in SUMO2) cross-links involve residues Lys374 and Lys376. C2H2-type zinc fingers lie at residues 378-400, 406-428, 434-456, 462-484, 490-512, 518-540, and 546-568; these read YHCK…QRIH, YQCN…QRIH, YECN…QRIH, YECD…QRSH, YKCN…QRIH, and YKCK…LRIH. Glycyl lysine isopeptide (Lys-Gly) (interchain with G-Cter in SUMO2) cross-links involve residues Lys413 and Lys441. Lys502 participates in a covalent cross-link: Glycyl lysine isopeptide (Lys-Gly) (interchain with G-Cter in SUMO2). Lys572 participates in a covalent cross-link: Glycyl lysine isopeptide (Lys-Gly) (interchain with G-Cter in SUMO2).

It belongs to the krueppel C2H2-type zinc-finger protein family.

The protein resides in the nucleus. Its function is as follows. May be involved in transcriptional regulation. This Pan troglodytes (Chimpanzee) protein is Zinc finger protein with KRAB and SCAN domains 8 (ZKSCAN8).